We begin with the raw amino-acid sequence, 400 residues long: 1-deoxy-D-xylulose 5-phosphate reductoisomerase (400 aa).

NADPH is bound by residues T10, G11, S12, I13, G36, N38, and N124. K125 provides a ligand contact to 1-deoxy-D-xylulose 5-phosphate. NADPH is bound at residue E126. Mn(2+) is bound at residue D150. 1-deoxy-D-xylulose 5-phosphate-binding residues include S151, E152, S186, and H209. E152 is a binding site for Mn(2+). G215 contributes to the NADPH binding site. Residues S222, N227, K228, and E231 each contribute to the 1-deoxy-D-xylulose 5-phosphate site. Residue E231 coordinates Mn(2+).

Belongs to the DXR family. Requires Mg(2+) as cofactor. The cofactor is Mn(2+).

The enzyme catalyses 2-C-methyl-D-erythritol 4-phosphate + NADP(+) = 1-deoxy-D-xylulose 5-phosphate + NADPH + H(+). It functions in the pathway isoprenoid biosynthesis; isopentenyl diphosphate biosynthesis via DXP pathway; isopentenyl diphosphate from 1-deoxy-D-xylulose 5-phosphate: step 1/6. Its function is as follows. Catalyzes the NADPH-dependent rearrangement and reduction of 1-deoxy-D-xylulose-5-phosphate (DXP) to 2-C-methyl-D-erythritol 4-phosphate (MEP). In Aliivibrio fischeri (strain MJ11) (Vibrio fischeri), this protein is 1-deoxy-D-xylulose 5-phosphate reductoisomerase.